The following is a 364-amino-acid chain: MKNLRVLVVDDTILYRKIVSDLLREIPGIEVIGVAHNGKIALDKIRLSKPDLITLDIEMPVMNGIELLEHLKDIPDAPGAVMLSTLTSDGSRMTMKALELGAFDFILKPQEKTPAANKAALANSLKQIVKTYRLRNIGFSRTRATTPASRLSPRTTIKREIKTTDRSIKKGKAEIVVIGISTGGPNALTNMLPQIPGNIGVPILIVQHMPPVFTASLATSLNKKCQIEVKEAEDGEAIQPGIAYIAPGGKQMKISASKNGVERLIKITNDPPENSCRPSVDYLFRSVGDYFIGRATAVIMTGMGADGTKGLEVLMAKGAHSIGQDEESCVVYGMPKSVADAGLIDTVCPLNKIAQEIVHTVKLY.

Positions 5 to 123 (RVLVVDDTIL…PAANKAALAN (119 aa)) constitute a Response regulatory domain. D56 carries the post-translational modification 4-aspartylphosphate. Residues 174–364 (EIVVIGISTG…QEIVHTVKLY (191 aa)) form the CheB-type methylesterase domain. Active-site residues include S181, H208, and D306.

The protein belongs to the CheB family. In terms of processing, phosphorylated by CheA. Phosphorylation of the N-terminal regulatory domain activates the methylesterase activity.

The protein resides in the cytoplasm. It catalyses the reaction [protein]-L-glutamate 5-O-methyl ester + H2O = L-glutamyl-[protein] + methanol + H(+). It carries out the reaction L-glutaminyl-[protein] + H2O = L-glutamyl-[protein] + NH4(+). Its function is as follows. Involved in chemotaxis. Part of a chemotaxis signal transduction system that modulates chemotaxis in response to various stimuli. Catalyzes the demethylation of specific methylglutamate residues introduced into the chemoreceptors (methyl-accepting chemotaxis proteins or MCP) by CheR. Also mediates the irreversible deamidation of specific glutamine residues to glutamic acid. The protein is Protein-glutamate methylesterase/protein-glutamine glutaminase of Desulfotalea psychrophila (strain LSv54 / DSM 12343).